A 554-amino-acid chain; its full sequence is Suppressor of hairless homolog (554 aa).

The interval 1–31 (MYHPHHLPAHGQVQSHQHREDAAATSSRDVN) is disordered. 3 consecutive DNA-binding regions follow at residues 83–90 (KSYGNEKR), 218–227 (RLRSQTVSTR), and 291–323 (RKVDKQTAILDADDPVSQLHKCAFYLKDTERMY). The IPT/TIG domain occupies 381 to 471 (PNVHSLQLNG…YPTNLTFTFT (91 aa)). Positions 489-554 (GSKRPSASMP…NGANMLRTAS (66 aa)) are disordered. The span at 508-519 (DSGRGNESDRGD) shows a compositional bias: basic and acidic residues.

The protein belongs to the Su(H) family. In terms of assembly, interacts with activated Notch proteins.

The protein localises to the nucleus. Functionally, transcriptional regulator that plays a central role in Notch signaling, a signaling pathway involved in cell-cell communication that regulates a broad spectrum of cell-fate determinations. Acts as a transcriptional repressor when it is not associated with Notch proteins. When associated with some Notch protein, it acts as a transcriptional activator that activates transcription of Notch target genes. Required for the transcriptional expression of Brachyury, suggesting that it participates in notochord differentiation. This is Suppressor of hairless homolog (Su(H)) from Ciona intestinalis (Transparent sea squirt).